Here is a 261-residue protein sequence, read N- to C-terminus: Carnitinyl-CoA dehydratase (261 aa).

Glutamate 111 functions as the Nucleophile in the catalytic mechanism. Glutamate 131 functions as the Proton acceptor in the catalytic mechanism.

It belongs to the enoyl-CoA hydratase/isomerase family.

The enzyme catalyses (R)-carnitinyl-CoA = crotonobetainyl-CoA + H2O. It participates in amine and polyamine metabolism; carnitine metabolism. Functionally, catalyzes the reversible dehydration of L-carnitinyl-CoA to crotonobetainyl-CoA. The chain is Carnitinyl-CoA dehydratase from Escherichia coli (strain SMS-3-5 / SECEC).